A 1017-amino-acid polypeptide reads, in one-letter code: uncharacterized protein (1017 aa).

The segment at residues 1 to 34 (MGNLTMSRRTFVKTAAITGAAAAAFGASTHTALA) is a signal peptide (tat-type signal). Positions 45 to 103 (DTVAVKTCCRGCGKMECGVKVIVQNGRAIRVEGDEGAFQSMGNCCTKSQSSIQAAYHPD) constitute a 4Fe-4S Mo/W bis-MGD-type domain. Residues Cys-53, Cys-56, Cys-61, and Cys-89 each coordinate [4Fe-4S] cluster. Catalysis depends on Lys-91, which acts as the Electron donor/acceptor.

The protein belongs to the prokaryotic molybdopterin-containing oxidoreductase family. It depends on [4Fe-4S] cluster as a cofactor. Requires Mo-bis(molybdopterin guanine dinucleotide) as cofactor. In terms of processing, predicted to be exported by the Tat system. The position of the signal peptide cleavage has not been experimentally proven.

This is an uncharacterized protein from Eggerthella lenta (strain ATCC 25559 / DSM 2243 / CCUG 17323 / JCM 9979 / KCTC 3265 / NCTC 11813 / VPI 0255 / 1899 B) (Eubacterium lentum).